Reading from the N-terminus, the 310-residue chain is Ribosomal RNA large subunit methyltransferase F (310 aa).

This sequence belongs to the methyltransferase superfamily. METTL16/RlmF family.

It localises to the cytoplasm. The enzyme catalyses adenosine(1618) in 23S rRNA + S-adenosyl-L-methionine = N(6)-methyladenosine(1618) in 23S rRNA + S-adenosyl-L-homocysteine + H(+). Specifically methylates the adenine in position 1618 of 23S rRNA. This Pseudoalteromonas translucida (strain TAC 125) protein is Ribosomal RNA large subunit methyltransferase F.